Here is a 366-residue protein sequence, read N- to C-terminus: Mitogen-activated protein kinase sakA (366 aa).

A Protein kinase domain is found at 20–299; sequence YTDLQPVGMG…AGEALAHEYL (280 aa). Residues 26 to 34 and Lys-49 each bind ATP; that span reads VGMGAFGLV. Asp-141 functions as the Proton acceptor in the catalytic mechanism. Thr-171 is subject to Phosphothreonine. The short motif at 171-173 is the TXY element; the sequence is TGY. Position 173 is a phosphotyrosine (Tyr-173).

The protein belongs to the protein kinase superfamily. Ser/Thr protein kinase family. MAP kinase subfamily. HOG1 sub-subfamily. As to quaternary structure, interacts with the AGC kinase ypkA. Interacts with sakA upon osmotic and cell wall stresses. Mg(2+) serves as cofactor. In terms of processing, dually phosphorylated on Thr-171 and Tyr-173, which activates the enzyme. Environmental stresses such as high temperature, osmotic stress, cold stress or ethanol stress modulate the activation of sakA via phosphorylation.

Its subcellular location is the cytoplasm. It is found in the nucleus. The catalysed reaction is L-seryl-[protein] + ATP = O-phospho-L-seryl-[protein] + ADP + H(+). The enzyme catalyses L-threonyl-[protein] + ATP = O-phospho-L-threonyl-[protein] + ADP + H(+). Activated by tyrosine and threonine phosphorylation. Deactivated by protein phosphatase 2C homolog 2 ptcB. In terms of biological role, proline-directed serine/threonine-protein kinase involved in a signal transduction pathway that is activated by changes in the osmolarity of the extracellular environment. Controls osmotic regulation of transcription of target genes. Involved in environmental stress response. With mpkC, plays a redundant or cooperative role in the conidial stress resistance. Also plays a supportive role in osmotic stress adaptation when sakA is deficient. Involved in paradoxical growth, the cell wall integrity (CWI) pathway and biofilm formation. Also collaborates with mpkC to allow ful virulence in a neutropenic murine model ofinvasive pulmonary aspergillosis. MpkC and sakA have both independent and collaborative functions during the transcriptional response to transient osmotic stress and sakA not only seems to modulate pathways involved in nucleotide, fatty acid, nitrogen and organic acid biosynthesis but is also important for the activation of genes involved in mitochondrial and endoplasmic reticulum functions. The sequence is that of Mitogen-activated protein kinase sakA from Aspergillus fumigatus (strain ATCC MYA-4609 / CBS 101355 / FGSC A1100 / Af293) (Neosartorya fumigata).